A 639-amino-acid chain; its full sequence is Coiled-coil domain-containing protein 27 (639 aa).

The disordered stretch occupies residues 154–176; it reads YPRKRSEPSDPSPTGSPTVVKKS. The stretch at 203 to 242 forms a coiled coil; sequence QRFSEMESQMQKKDQEILTLQKEKEALKKQLKNLLRGKGT. The segment at 291–385 is disordered; sequence ESSKELHVEP…EECHPKRSYS (95 aa). Basic and acidic residues predominate over residues 292 to 309; that stretch reads SSKELHVEPGSAIEEKSS. Positions 310–320 are enriched in low complexity; the sequence is EGPPEEAAAAK. Composition is skewed to acidic residues over residues 336–350 and 358–369; these read GPEEEEEEEEEEVEG and EGEILVNEEEAS. Residues 370 to 380 show a composition bias toward basic and acidic residues; the sequence is WELREDEECHP.

This is Coiled-coil domain-containing protein 27 (Ccdc27) from Mus musculus (Mouse).